Consider the following 967-residue polypeptide: Probable disease resistance protein At1g61190 (967 aa).

A coiled-coil region spans residues 20-68; that stretch reads RCLCGKGYIRNLEKNLRALQREMEDLRATQHEVQNKVAREESRHQQRLE. The disordered stretch occupies residues 132-153; the sequence is GNFDEVSQPPPRSEVEERPTQP. An NB-ARC domain is found at 138-441; that stretch reads SQPPPRSEVE…CEGFIGEDQV (304 aa). Position 180–187 (180–187) interacts with ATP; it reads GMGGVGKT. LRR repeat units follow at residues 516–537, 538–559, 562–585, 586–608, and 609–631; these read AVRR…SKCS, ELTT…FIRY, KLVV…SGLV, SLQY…KELK, and KLIF…SRLL.

Belongs to the disease resistance NB-LRR family.

In terms of biological role, probable disease resistance protein. In Arabidopsis thaliana (Mouse-ear cress), this protein is Probable disease resistance protein At1g61190.